The primary structure comprises 210 residues: Pyrrolidone-carboxylate peptidase (210 aa).

Active-site residues include glutamate 80, cysteine 143, and histidine 162.

The protein belongs to the peptidase C15 family. In terms of assembly, homotetramer.

Its subcellular location is the cytoplasm. The catalysed reaction is Release of an N-terminal pyroglutamyl group from a polypeptide, the second amino acid generally not being Pro.. Removes 5-oxoproline from various penultimate amino acid residues except L-proline. The sequence is that of Pyrrolidone-carboxylate peptidase from Chromobacterium violaceum (strain ATCC 12472 / DSM 30191 / JCM 1249 / CCUG 213 / NBRC 12614 / NCIMB 9131 / NCTC 9757 / MK).